The chain runs to 376 residues: Carbamoyl phosphate synthase small chain (376 aa).

The interval 1 to 187 (MKALLVLEDG…AEDGSYAWRG (187 aa)) is CPSase. Residues Ser45, Gly239, and Gly241 each coordinate L-glutamine. The 186-residue stretch at 191 to 376 (PLLVYDFGIK…RKIIGESAGA (186 aa)) folds into the Glutamine amidotransferase type-1 domain. Catalysis depends on Cys266, which acts as the Nucleophile. Leu267, Gln270, Asn308, Gly310, and Phe311 together coordinate L-glutamine. Residues His349 and Glu351 contribute to the active site.

It belongs to the CarA family. As to quaternary structure, composed of two chains; the small (or glutamine) chain promotes the hydrolysis of glutamine to ammonia, which is used by the large (or ammonia) chain to synthesize carbamoyl phosphate. Tetramer of heterodimers (alpha,beta)4.

It carries out the reaction hydrogencarbonate + L-glutamine + 2 ATP + H2O = carbamoyl phosphate + L-glutamate + 2 ADP + phosphate + 2 H(+). The catalysed reaction is L-glutamine + H2O = L-glutamate + NH4(+). The protein operates within amino-acid biosynthesis; L-arginine biosynthesis; carbamoyl phosphate from bicarbonate: step 1/1. Its pathway is pyrimidine metabolism; UMP biosynthesis via de novo pathway; (S)-dihydroorotate from bicarbonate: step 1/3. Its function is as follows. Small subunit of the glutamine-dependent carbamoyl phosphate synthetase (CPSase). CPSase catalyzes the formation of carbamoyl phosphate from the ammonia moiety of glutamine, carbonate, and phosphate donated by ATP, constituting the first step of 2 biosynthetic pathways, one leading to arginine and/or urea and the other to pyrimidine nucleotides. The small subunit (glutamine amidotransferase) binds and cleaves glutamine to supply the large subunit with the substrate ammonia. In Desulfovibrio desulfuricans (strain ATCC 27774 / DSM 6949 / MB), this protein is Carbamoyl phosphate synthase small chain.